A 335-amino-acid chain; its full sequence is uncharacterized protein (335 aa).

28-35 (GPINSGKT) provides a ligand contact to ATP.

Belongs to the archaeal ATPase family.

This is an uncharacterized protein from Pyrococcus abyssi (strain GE5 / Orsay).